The following is a 196-amino-acid chain: Heat shock protein beta-8 (196 aa).

A disordered region spans residues 1 to 28 (MADGQLPFPCSYPSRLRRDPFRDSPLSS). Ser24 and Ser57 each carry phosphoserine. Thr63 is subject to Phosphothreonine. Arg71 and Arg78 each carry asymmetric dimethylarginine. Positions 74–185 (TATARFGVPA…PFGESSFNNE (112 aa)) constitute a sHSP domain. Residues 176 to 196 (PFGESSFNNELPQDNQEVTCS) form a disordered region. Residues 178–196 (GESSFNNELPQDNQEVTCS) are compositionally biased toward polar residues.

Belongs to the small heat shock protein (HSP20) family. As to quaternary structure, monomer. Forms a ternary complex with BAG3 and HSPA1A. Component of the chaperone-assisted selective autophagy (CASA) complex consisting of BAG3, HSPA8/HSC70, HSPB8 and STUB1/CHIP. Interacts with HSPB1. Interacts with DNAJB6. Interacts with BAG3. Post-translationally, phosphorylated.

The protein localises to the cytoplasm. It localises to the nucleus. Involved in the chaperone-assisted selective autophagy (CASA), a crucial process for protein quality control, particularly in mechanical strained cells and tissues such as muscle. Displays temperature-dependent chaperone activity. The sequence is that of Heat shock protein beta-8 (Hspb8) from Rattus norvegicus (Rat).